Consider the following 346-residue polypeptide: Methionine import ATP-binding protein MetN 1 (346 aa).

An ABC transporter domain is found at 2-241 (IELKNVSKVF…PQHVTTKKFV (240 aa)). 38–45 (GYSGAGKS) contributes to the ATP binding site.

Belongs to the ABC transporter superfamily. Methionine importer (TC 3.A.1.24) family. As to quaternary structure, the complex is composed of two ATP-binding proteins (MetN), two transmembrane proteins (MetI) and a solute-binding protein (MetQ).

Its subcellular location is the cell membrane. The enzyme catalyses L-methionine(out) + ATP + H2O = L-methionine(in) + ADP + phosphate + H(+). The catalysed reaction is D-methionine(out) + ATP + H2O = D-methionine(in) + ADP + phosphate + H(+). Functionally, part of the ABC transporter complex MetNIQ involved in methionine import. Responsible for energy coupling to the transport system. This chain is Methionine import ATP-binding protein MetN 1, found in Bacillus anthracis.